A 421-amino-acid polypeptide reads, in one-letter code: Core-capsid bridging protein (421 aa).

Belongs to the adenoviridae core-capsid bridging protein family. As to quaternary structure, monomer. Homodimer. Exists in equilibrium between monomers and dimers in solution. Interacts with the histone-like nucleoprotein; this interactions bridge the virus core to the capsid. Interacts with core protein X; this interactions bridge the virus core to the capsid. Interacts with the endosome lysis protein VI; this interactions bridge the virus core to the capsid. Interacts with the peripentonal hexons. Interacts with host NPM1; this interaction might play a role in virus assembly.

It localises to the virion. Its subcellular location is the host nucleus. The protein resides in the host nucleolus. Associates loosely with the viral DNA to form an outer shell around the nucleoprotein-DNA complex and links it with the capsid by binding the endosome lysis protein. Dissociates from the viral genome during entry. Might be involved in nuclear capsid assembly of the viral particles through its association with NPM1/nucleophosmin. The chain is Core-capsid bridging protein from Canine adenovirus serotype 1 (strain RI261) (CAdV-1).